We begin with the raw amino-acid sequence, 128 residues long: Ribosome-binding factor A (128 aa).

Belongs to the RbfA family. As to quaternary structure, monomer. Binds 30S ribosomal subunits, but not 50S ribosomal subunits or 70S ribosomes.

The protein localises to the cytoplasm. Functionally, one of several proteins that assist in the late maturation steps of the functional core of the 30S ribosomal subunit. Associates with free 30S ribosomal subunits (but not with 30S subunits that are part of 70S ribosomes or polysomes). Required for efficient processing of 16S rRNA. May interact with the 5'-terminal helix region of 16S rRNA. The polypeptide is Ribosome-binding factor A (Haemophilus influenzae (strain ATCC 51907 / DSM 11121 / KW20 / Rd)).